The sequence spans 510 residues: NAD(P)H-quinone oxidoreductase subunit 2 A, chloroplastic (510 aa).

13 helical membrane-spanning segments follow: residues L24–L44, I57–F77, I99–I119, M124–C144, L149–Y169, Y183–G203, P227–A247, W295–I315, M323–D343, Y354–L374, A395–F415, L418–L438, and M484–I504.

Belongs to the complex I subunit 2 family. In terms of assembly, NDH is composed of at least 16 different subunits, 5 of which are encoded in the nucleus.

It localises to the plastid. Its subcellular location is the chloroplast thylakoid membrane. It carries out the reaction a plastoquinone + NADH + (n+1) H(+)(in) = a plastoquinol + NAD(+) + n H(+)(out). The catalysed reaction is a plastoquinone + NADPH + (n+1) H(+)(in) = a plastoquinol + NADP(+) + n H(+)(out). NDH shuttles electrons from NAD(P)H:plastoquinone, via FMN and iron-sulfur (Fe-S) centers, to quinones in the photosynthetic chain and possibly in a chloroplast respiratory chain. The immediate electron acceptor for the enzyme in this species is believed to be plastoquinone. Couples the redox reaction to proton translocation, and thus conserves the redox energy in a proton gradient. In Ranunculus macranthus (Large buttercup), this protein is NAD(P)H-quinone oxidoreductase subunit 2 A, chloroplastic.